A 164-amino-acid chain; its full sequence is HTH-type transcriptional regulator IscR (164 aa).

The 130-residue stretch at arginine 2–asparagine 131 folds into the HTH rrf2-type domain. The H-T-H motif DNA-binding region spans leucine 28 to lysine 51. Positions 92, 98, and 104 each coordinate [2Fe-2S] cluster.

It depends on [2Fe-2S] cluster as a cofactor.

Functionally, regulates the transcription of several operons and genes involved in the biogenesis of Fe-S clusters and Fe-S-containing proteins. The sequence is that of HTH-type transcriptional regulator IscR from Pectobacterium atrosepticum (strain SCRI 1043 / ATCC BAA-672) (Erwinia carotovora subsp. atroseptica).